Consider the following 71-residue polypeptide: Serine palmitoyltransferase small subunit A (71 aa).

The Cytoplasmic portion of the chain corresponds to 1–12 (MAGMALARAWKQ). Residues 13–29 (MSWFYYQYLLVTALYML) traverse the membrane as a helical segment. The Lumenal portion of the chain corresponds to 30 to 34 (EPWER). The helical transmembrane segment at 35-57 (TVFNSMLVSVVGMALYTGYVFMP) threads the bilayer. The Cytoplasmic portion of the chain corresponds to 58–71 (QHIMAILHYFEIVQ).

This sequence belongs to the SPTSS family. SPTSSA subfamily. As to quaternary structure, component of the serine palmitoyltransferase (SPT) complex, which is composed of SPTLC1, SPTLC2 or SPTLC3 and SPTSSA or SPTSSB. The heterodimer consisting of SPTLC1 and SPTLC2/SPTLC3 forms the catalytic core of the enzyme, while SPTSSA or SPTSSB subunits determine substrate specificity. SPT also interacts with ORMDL proteins, especially ORMDL3, which negatively regulate SPT activity in the presence of ceramides. Interacts with MBOAT7; the interaction plays a role in MBOAT7 localization to mitochondria-associated membranes.

Its subcellular location is the endoplasmic reticulum membrane. It participates in lipid metabolism; sphingolipid metabolism. Component of the serine palmitoyltransferase multisubunit enzyme (SPT) that catalyzes the initial and rate-limiting step in sphingolipid biosynthesis by condensing L-serine and activated acyl-CoA (most commonly palmitoyl-CoA) to form long-chain bases. The SPT complex is composed of SPTLC1, SPTLC2 or SPTLC3 and SPTSSA or SPTSSB. Within this complex, the heterodimer consisting of SPTLC1 and SPTLC2/SPTLC3 forms the catalytic core. Within the SPT complex, SPTSSA stimulates the catalytic activity and plays a role in substrate specificity, which depends upon the overall complex composition. The SPTLC1-SPTLC2-SPTSSA complex shows a strong preference for C16-CoA substrate, while the SPTLC1-SPTLC3-SPTSSA isozyme uses both C14-CoA and C16-CoA as substrates, with a slight preference for C14-CoA. Independently of its action as a SPT component, may be involved in MBOAT7 localization to mitochondria-associated membranes, a membrane bridge between the endoplasmic reticulum and mitochondria, may hence affect MBOAT7-catalyzed incorporation of arachidonic acid into phosphatidylinositol. This Mus musculus (Mouse) protein is Serine palmitoyltransferase small subunit A.